The primary structure comprises 223 residues: Twisted gastrulation protein homolog 1 (223 aa).

Residues 1–25 (MKLHYVAVLTLAILMFLTWLPESLS) form the signal peptide. Asn-52 and Asn-81 each carry an N-linked (GlcNAc...) asparagine glycan.

It belongs to the twisted gastrulation protein family. Interacts with CHRD and BMP4. This interaction enhances CHRD/BMP4 complex formation. Interacts with BMP7.

The protein localises to the secreted. May be involved in dorsoventral axis formation. Seems to antagonize BMP signaling by forming ternary complexes with CHRD and BMPs, thereby preventing BMPs from binding to their receptors. In addition to the anti-BMP function, also has pro-BMP activity, partly mediated by cleavage and degradation of CHRD, which releases BMPs from ternary complexes. May be an important modulator of BMP-regulated cartilage development and chondrocyte differentiation. May play a role in thymocyte development. The polypeptide is Twisted gastrulation protein homolog 1 (TWSG1) (Homo sapiens (Human)).